The sequence spans 206 residues: Type III pantothenate kinase (206 aa).

ATP is bound at residue 5-12; sequence DIGNTFLH. Residues Y69 and 73-76 contribute to the substrate site; that span reads GVDR. Catalysis depends on D75, which acts as the Proton acceptor. D90 contributes to the K(+) binding site. Position 93 (S93) interacts with ATP. Residue T145 participates in substrate binding.

This sequence belongs to the type III pantothenate kinase family. In terms of assembly, homodimer. The cofactor is NH4(+). Requires K(+) as cofactor.

It localises to the cytoplasm. It carries out the reaction (R)-pantothenate + ATP = (R)-4'-phosphopantothenate + ADP + H(+). Its pathway is cofactor biosynthesis; coenzyme A biosynthesis; CoA from (R)-pantothenate: step 1/5. Catalyzes the phosphorylation of pantothenate (Pan), the first step in CoA biosynthesis. The protein is Type III pantothenate kinase of Helicobacter hepaticus (strain ATCC 51449 / 3B1).